The primary structure comprises 2197 residues: MSSSIVSQLQALKSVLQADTEPSKRPFTRPSILFSPKEAADFDIESIYELGLKGLEVLGNKDERFKNYMNDLFSHKSKEIDRELLGKEENARIDSSISSYLRLLSGYLQFRASLETLEYLIRRYKIHIYNLEDVVLCALPYHDTHAFVRIVQLLSTGNSKWKFLDGVKNSGAPPPRSVIVQQCIRDKQVLEALCDYASRTKKYQPSKPVVSFSTAVVVGVLGSVPTVDGDIVKTILPFVDSGLQSGVKGCLDQQAGALMVVGMLANRAVLNTNLIKRLMRSIIDIGREHAKESSDPHSLRLSLMALINFVQLQSVDLIPRKALDLFNEIRDISGVLLGLSKEFNIKRFLAVLLDSLLFYSSSDDKCCEVLASIIETVPVSNLVDHLISKVFSLCMTQYQKNSDFRSSTSGSWAKKFLVVVSKKYPAELRAAVPKFLEATEVQSKKEDLKLEMLSCMLDGNSDMSHPFVDSKLWFRLHHPRAAVRCAALSSLNGVLKDDSSKAENLVTIQDAILRQLWDDDLAVVQAALSFDKLPNIITSSGLLDALLHVVKRCVGILVSGVSHNVQLAVDVVALSLKIAVSSFGNQTDSTEKVTSAMFPFLLIQPKTWNLNLLVLKLGKDVNWPLFKNLAADDGMKKLPDIMSTNLSSISMDIINDLGEALSLDPDERRIELIERACNYKLSEVLETCSNIKCSEQDRNKLQKGLLIRESVSALNIDVINKLVEAFMMHPADYIQWLTVSCRDSTLSKTLFYMILMHSLQKMNSSSDPSQLLDLFELCFPVLKTEWEELEVEVDVSLKELSKSNCQELLYQLLDTSDFTALNSKVLICLFWKLGESFIKLEPAHDASVLNKRLSSGLEDLFFFFATTRLRHVFKEHLHFRVREAKVCPVLFLSRLISREDVPPLVQIESLRCFSYLCSSGNNEWLIQVFSSFPVLLVPMSSDNQDVKAAAINCIEALFNLRAAIYGSSFDELLGMIVQQRRLILSDNKFFASYLTSLLSSTTNDLLVPVGLQKRFDQSTKENILSVILLCAEDLPAYGKLRVLSLLKDLGIMLMRDEIVKLLSQLLDKRSQYYYKLDKTSQPLSDTEVDLLCLLLECSMMRTSSFKGQSLDDHILSALNVDCMASERPAVISPCLTILEKLSNRFYDELQTDVQIRFFHKLVSMFRSSNGSIQNGAKEAVLRLKLSSSTVVLALDRITQQDTLVIGSLSKKKKQKKNSKSCPEEDINSEEFRSGEKALSFIASLLDMLLLKKDLTHRESLIRPLFKLLQRSMSKEWVKIAFSIEETSLQPPQDVRETTPTFISSIQQTLLLILKDIFDSLNMNPLKAEVANEINVKMLVELAHSSNDGVTRNHIFSLFTAIVKFVPDKVLDHIISILTLVGESTVTQIDSHSKSIFEGFISMVIPFWLSKTKSEEQLLQIFVKVLPDIVEHRRRSIVAYLLGVIGERNGLPALLVLLFKSLISRKDSAWLGNANVSESFASIVKKEWEYSFAMEICEQYSSSTWLSSLVILLQTISKDSKQCFLQMRLVLEFVFQKLQDPEFAFAVSLEPRNNVSVGIQQELQELMKCCICLLQAIDAKKEKDVTSSVRNEIRMRIHDVLMTVTGAMDLSIYFRVVTSLLQQQTDYNGTKKVLGLISERAKDTSSSKMKHKRKISNQKGRNSWLNLDEVAVDSFGKMCEEIVHLINATDDESGVPVKRAAISTLEVLAGRFPSGHPIFRKCLAAVAECISSKNLGVSSSCLRTTGALINVLGPKALIELPCIMKNLVKQSLEVSFASQSGRNATAEEQLLMLSVLVTLEAVIDKLGGFLNPHLGDIMKIMVLHPEYVSDFDKNLKSKANAIRRLLTDKIPVRLTLQPLLRIYNEAVSSGNASLVIAFNMLEDLVVKMDRSSIVSSHGKIFDQCLVALDIRRLNPAAIQNIDDAERSVTSAMVALTKKLTESEFRPLFIRSIDWAESDVVDGSGSENKSIDRAISFYGLVDRLCESHRSIFVPYFKYVLDGIVAHLTTAEASVSTRKKKKAKIQQTSDSIQPKSWHLRALVLSCLKNCFLHDTGSLKFLDTNNFQVLLKPIVSQLVVEPPSSLKEHPHVPSVDEVDDLLVSCIGQMAVASGSDLLWKPLNHEVLMQTRSESVRSRMLSLRSVKQMLDNLKEEYLVLLAETIPFLAELLEDVELSVKSLAQDIIKQMEEMSGESLAEYL.

Ser2 bears the N-acetylserine mark. An HEAT repeat occupies 2159–2195; sequence TIPFLAELLEDVELSVKSLAQDIIKQMEEMSGESLAE.

This sequence belongs to the HEATR1/UTP10 family.

The protein resides in the nucleus. Its subcellular location is the nucleolus. Its function is as follows. Involved in nucleolar processing of pre-18S ribosomal RNA. Involved in ribosome biosynthesis. This is an uncharacterized protein from Arabidopsis thaliana (Mouse-ear cress).